Consider the following 104-residue polypeptide: MAGKAHRLNAEEREQLLPNLRAVGWNEVEGRDAIFKEFHFKDFNRAFGFMTRVALQAEKLDHHPEWFNVYNKVHITLSTHECTGLSERDINLASFIEQVAASLS.

An N-acetylalanine modification is found at A2. Residues 61 to 63 (DHH) and 78 to 81 (STHE) contribute to the substrate site.

It belongs to the pterin-4-alpha-carbinolamine dehydratase family. In terms of assembly, homotetramer and homodimer. In terms of tissue distribution, the major tissues expressing cDcoH are hypothalamus, kidney and liver.

It is found in the cytoplasm. The protein localises to the nucleus. It carries out the reaction (4aS,6R)-4a-hydroxy-L-erythro-5,6,7,8-tetrahydrobiopterin = (6R)-L-erythro-6,7-dihydrobiopterin + H2O. In terms of biological role, involved in tetrahydrobiopterin biosynthesis. Seems to both prevent the formation of 7-pterins and accelerate the formation of quinonoid-BH2. Coactivator for HNF1A-dependent transcription. Regulates the dimerization of homeodomain protein HNF1A and enhances its transcriptional activity. Also acts as a coactivator for HNF1B-dependent transcription. The sequence is that of Pterin-4-alpha-carbinolamine dehydratase (PCBD1) from Gallus gallus (Chicken).